A 390-amino-acid chain; its full sequence is Cell division protein FtsZ (390 aa).

GTP contacts are provided by residues 20-24 (GGGNN), 106-108 (GTG), glutamate 137, arginine 141, and aspartate 184.

It belongs to the FtsZ family. Homodimer. Polymerizes to form a dynamic ring structure in a strictly GTP-dependent manner. Interacts directly with several other division proteins.

It localises to the cytoplasm. Essential cell division protein that forms a contractile ring structure (Z ring) at the future cell division site. The regulation of the ring assembly controls the timing and the location of cell division. One of the functions of the FtsZ ring is to recruit other cell division proteins to the septum to produce a new cell wall between the dividing cells. Binds GTP and shows GTPase activity. This Mycoplasmopsis pulmonis (strain UAB CTIP) (Mycoplasma pulmonis) protein is Cell division protein FtsZ.